A 536-amino-acid polypeptide reads, in one-letter code: Chromosomal replication initiator protein DnaA (536 aa).

The tract at residues 1-72 (MNDFWQHCSA…DLARDFWNAP (72 aa)) is domain I, interacts with DnaA modulators. Positions 72–199 (PIEVQFVLDP…EAADSMYERS (128 aa)) are domain II. Residues 97–121 (RAPLPAANPAPVTAGPAPSGAADAN) form a disordered region. Residues 105–121 (PAPVTAGPAPSGAADAN) are compositionally biased toward low complexity. The interval 200–416 (KLNPVLTFDN…GALRKILAYS (217 aa)) is domain III, AAA+ region. Positions 244, 246, 247, and 248 each coordinate ATP. The tract at residues 417–536 (KFHGREITIE…LHVLEQTLKG (120 aa)) is domain IV, binds dsDNA.

The protein belongs to the DnaA family. As to quaternary structure, oligomerizes as a right-handed, spiral filament on DNA at oriC.

The protein resides in the cytoplasm. Its function is as follows. Plays an essential role in the initiation and regulation of chromosomal replication. ATP-DnaA binds to the origin of replication (oriC) to initiate formation of the DNA replication initiation complex once per cell cycle. Binds the DnaA box (a 9 base pair repeat at the origin) and separates the double-stranded (ds)DNA. Forms a right-handed helical filament on oriC DNA; dsDNA binds to the exterior of the filament while single-stranded (ss)DNA is stabiized in the filament's interior. The ATP-DnaA-oriC complex binds and stabilizes one strand of the AT-rich DNA unwinding element (DUE), permitting loading of DNA polymerase. After initiation quickly degrades to an ADP-DnaA complex that is not apt for DNA replication. Binds acidic phospholipids. The protein is Chromosomal replication initiator protein DnaA of Burkholderia thailandensis (strain ATCC 700388 / DSM 13276 / CCUG 48851 / CIP 106301 / E264).